Here is a 715-residue protein sequence, read N- to C-terminus: D-ribulokinase YDR109C (715 aa).

The interval Met1–Ile27 is disordered.

The protein belongs to the FGGY kinase family.

The enzyme catalyses D-ribulose + ATP = D-ribulose 5-phosphate + ADP + H(+). It participates in carbohydrate metabolism; pentose and glucuronate interconversion. Its function is as follows. Catalyzes ATP-dependent phosphorylation of D-ribulose at C-5 to form D-ribulose 5-phosphate. Postulated to function in a metabolite repair mechanism by preventing toxic accumulation of free D-ribulose formed by non-specific phosphatase activities. Alternatively, may play a role in regulating D-ribulose 5-phosphate recycling in the pentose phosphate pathway. The chain is D-ribulokinase YDR109C from Saccharomyces cerevisiae (strain ATCC 204508 / S288c) (Baker's yeast).